Consider the following 562-residue polypeptide: Arginine--tRNA ligase (562 aa).

The 'HIGH' region signature appears at 121–131 (PNIAKPISMGH).

The protein belongs to the class-I aminoacyl-tRNA synthetase family. As to quaternary structure, monomer.

The protein localises to the cytoplasm. It catalyses the reaction tRNA(Arg) + L-arginine + ATP = L-arginyl-tRNA(Arg) + AMP + diphosphate. This Lactiplantibacillus plantarum (strain ATCC BAA-793 / NCIMB 8826 / WCFS1) (Lactobacillus plantarum) protein is Arginine--tRNA ligase.